A 339-amino-acid chain; its full sequence is Ketol-acid reductoisomerase (NADP(+)) (339 aa).

The KARI N-terminal Rossmann domain maps to 1-182; sequence MRVYYDRDAD…GGGRAGIIET (182 aa). NADP(+) is bound by residues 24 to 27, Arg48, Ser51, Thr53, and 83 to 86; these read YGSQ and DELQ. Residue His108 is part of the active site. Residue Gly134 participates in NADP(+) binding. Residues 183–328 form the KARI C-terminal knotted domain; sequence SFKEECETDL…AKLREMMPWI (146 aa). The Mg(2+) site is built by Asp191, Glu195, Glu227, and Glu231. Ser252 is a substrate binding site.

The protein belongs to the ketol-acid reductoisomerase family. Requires Mg(2+) as cofactor.

The catalysed reaction is (2R)-2,3-dihydroxy-3-methylbutanoate + NADP(+) = (2S)-2-acetolactate + NADPH + H(+). The enzyme catalyses (2R,3R)-2,3-dihydroxy-3-methylpentanoate + NADP(+) = (S)-2-ethyl-2-hydroxy-3-oxobutanoate + NADPH + H(+). The protein operates within amino-acid biosynthesis; L-isoleucine biosynthesis; L-isoleucine from 2-oxobutanoate: step 2/4. It participates in amino-acid biosynthesis; L-valine biosynthesis; L-valine from pyruvate: step 2/4. In terms of biological role, involved in the biosynthesis of branched-chain amino acids (BCAA). Catalyzes an alkyl-migration followed by a ketol-acid reduction of (S)-2-acetolactate (S2AL) to yield (R)-2,3-dihydroxy-isovalerate. In the isomerase reaction, S2AL is rearranged via a Mg-dependent methyl migration to produce 3-hydroxy-3-methyl-2-ketobutyrate (HMKB). In the reductase reaction, this 2-ketoacid undergoes a metal-dependent reduction by NADPH to yield (R)-2,3-dihydroxy-isovalerate. The polypeptide is Ketol-acid reductoisomerase (NADP(+)) (Rhodopseudomonas palustris (strain BisB5)).